We begin with the raw amino-acid sequence, 707 residues long: Bone morphogenetic protein 1 (707 aa).

The segment at 57–90 is disordered; sequence SGAATNISRPEKGRRTRKERRRSREKRASTSRPE. N62 carries N-linked (GlcNAc...) asparagine glycosylation. Residues 68 to 81 show a composition bias toward basic residues; it reads KGRRTRKERRRSRE. Residues 84-283 form the Peptidase M12A domain; the sequence is ASTSRPERVW…AQARKLYKCP (200 aa). N105 is a glycosylation site (N-linked (GlcNAc...) asparagine). 4 cysteine pairs are disulfide-bonded: C126–C282, C146–C168, C148–C149, and C285–C311. Residue H176 coordinates Zn(2+). Residue E177 is part of the active site. H180 and H186 together coordinate Zn(2+). 2 CUB domains span residues 285-397 and 398-509; these read CGET…YEAL and CGGE…NYFK. N-linked (GlcNAc...) asparagine glycosylation is found at N295 and N326. Intrachain disulfides connect C338–C360, C398–C424, C451–C473, C514–C526, C522–C535, C537–C550, C554–C580, and C607–C629. Residues 510 to 551 form the EGF-like; calcium-binding domain; sequence EVDECSRPNNGGCEQRCVNTLGSYKCACDPGYELGQDKKSCE. The CUB 3 domain maps to 554–666; the sequence is CGGFLTKLNG…KGFQANFFSE (113 aa). N562 carries N-linked (GlcNAc...) asparagine glycosylation. Residues 682 to 707 form a disordered region; the sequence is RGQQNQAPKRVRPRMRLRTVKKTRPP. Over residues 690–707 the composition is skewed to basic residues; that stretch reads KRVRPRMRLRTVKKTRPP.

Interacts with olfml3/ont1. Zn(2+) serves as cofactor. In terms of processing, proteolytically activated in the trans-Golgi network by furin-like/paired basic proprotein convertases, cleavage is not required for secretion.

It localises to the golgi apparatus. The protein localises to the trans-Golgi network. The protein resides in the secreted. Its subcellular location is the extracellular space. It is found in the extracellular matrix. Functionally, metalloprotease involved in pattern formation in gastrula and later differentiation of developing organs. Able to cleave chordin (chrd), suggesting that it may act in dorsoventral patterning during early development by regulating the chordin (chrd) activity. The polypeptide is Bone morphogenetic protein 1 (bmp1) (Xenopus laevis (African clawed frog)).